Here is a 240-residue protein sequence, read N- to C-terminus: Peptidyl-tRNA hydrolase 2 (240 aa).

Y60 serves as a coordination point for tRNA. The active-site Proton acceptor is the H65. Positions 111, 113, and 159 each coordinate tRNA.

This sequence belongs to the PTH family. In terms of assembly, monomer.

It localises to the cytoplasm. It carries out the reaction an N-acyl-L-alpha-aminoacyl-tRNA + H2O = an N-acyl-L-amino acid + a tRNA + H(+). Hydrolyzes ribosome-free peptidyl-tRNAs (with 1 or more amino acids incorporated), which drop off the ribosome during protein synthesis, or as a result of ribosome stalling. Functionally, catalyzes the release of premature peptidyl moieties from peptidyl-tRNA molecules trapped in stalled 50S ribosomal subunits, and thus maintains levels of free tRNAs and 50S ribosomes. This chain is Peptidyl-tRNA hydrolase 2, found in Corynebacterium jeikeium (strain K411).